The sequence spans 7152 residues: Replicase polyprotein 1ab (7152 aa).

One can recognise a CoV Nsp1 globular domain in the interval 54–174 (YDNHVKIDCR…HKWFQFCRLY (121 aa)). A BetaCoV Nsp1 C-terminal domain is found at 192 to 222 (FSVEDAYAEVHAEPKGKYSQKAYALLRQYRG). A CoV Nsp2 N-terminal domain is found at 226–488 (VLFVDQYGCD…LITHALYLDY (263 aa)). Zn(2+)-binding residues include Cys365, Cys370, Cys386, and Cys389. A C4 region spans residues 365–389 (CFNDNCDFYGWVSGNMMDGFSCPLC). The CoV Nsp2 middle domain maps to 493–681 (CGNLEQNHIL…VNKFYTFFKL (189 aa)). One can recognise a CoV Nsp2 C-terminal domain in the interval 697–809 (LKTINGLVCI…LDQAWRFPCA (113 aa)). Residues 811–923 (RKVNFNEKPV…MYCTFAIEDV (113 aa)) enclose the Ubiquitin-like 1 domain. 11 tandem repeats follow at residues 945–954 (NDDEDVVTGD), 955–964 (NDDEDVVTGD), 965–974 (NDDEDVVTGD), 975–984 (NDDEDVVTGD), 985–994 (NDDEDVVTGD), 995–1004 (NDDEDVVTGD), 1005–1014 (NDDEDVVTGD), 1015–1024 (NDDEDVVTGD), 1025–1034 (NDDEDVVTGD), 1035–1044 (NDDEDVVTGD), and 1045–1054 (NDDEDVVTGD). The 11 X 10 AA tandem repeat of N-[DN]-D-E-D-V-V-T-G-D stretch occupies residues 945–1054 (NDDEDVVTGD…NDDEDVVTGD (110 aa)). A disordered region spans residues 947-1036 (DEDVVTGDND…DEDVVTGDND (90 aa)). A Peptidase C16 1 domain is found at 1093-1343 (VFNDVYNDAL…VCFVKGDIIN (251 aa)). The active-site For PL1-PRO activity is Cys1131. 4 residues coordinate Zn(2+): Cys1208, Cys1211, Cys1234, and Cys1236. The segment at 1208 to 1236 (CLKCGFSFDLNGLDAVFFYGDIVSHVCKC) adopts a C4-type 1 zinc-finger fold. Residues His1282 and Asp1293 each act as for PL1-PRO activity in the active site. Positions 1321–1492 (ELAQLYGLCI…IIQKCQITSV (172 aa)) constitute a Macro domain. The region spanning 1548 to 1619 (NDVRDYLLSK…TVNQVCVLLA (72 aa)) is the DPUP domain. The region spanning 1619 to 1674 (AKKIDVLLTVDGVNFKSISLTVGEVFGKILGNVFCDGIDVTKLKCSDFYADKILYQ) is the Ubiquitin-like 2 domain. Residues 1688–1948 (SSFGFDQQQL…MVAYNPDLSQ (261 aa)) form the Peptidase C16 2 domain. The For PL2-PRO activity role is filled by Cys1727. Zn(2+) is bound by residues Cys1805, Cys1807, Cys1839, and Cys1841. Residues 1805-1841 (CDCGIKQESRVGVDAVMHFGTLAKTDLFNGYKIGCNC) form a C4-type 2 zinc finger. Active-site for PL2-PRO activity residues include His1884 and Asp1898. Residues 1962 to 2063 (IKAQFKPFAK…TYFNKPSFKS (102 aa)) enclose the Nucleic acid-binding domain. Residues 2078–2227 (ESQGNVVTSV…NDKTIFYTTE (150 aa)) form the G2M domain. The next 3 helical transmembrane spans lie at 2196-2216 (AIEF…LLHF), 2257-2277 (FLVV…NVIF), and 2288-2308 (FPIF…LVTI). Residues 2196 to 2433 (AIEFYGFLKW…FVLLRFYIVV (238 aa)) form an HD1 region. The 3Ecto domain maps to 2293-2354 (GRIVMWIKAT…AIDFVQYEVD (62 aa)). 2 disulfides stabilise this stretch: Cys2309-Cys2333 and Cys2324-Cys2330. The next 2 membrane-spanning stretches (helical) occupy residues 2371 to 2391 (LVIG…LIGL) and 2413 to 2433 (FIVF…YIVV). Positions 2441–2531 (GFIRHIVYGC…ELKRPVNPTD (91 aa)) are Y1. The 368-residue stretch at 2441-2808 (GFIRHIVYGC…LTTPFSLKGG (368 aa)) folds into the CoV Nsp3 Y domain. Zn(2+)-binding residues include His2445, Cys2450, Cys2455, Cys2458, Cys2491, His2494, Cys2498, and Cys2501. The tract at residues 2445–2458 (HIVYGCNKAGCLFC) is ZF1. A ZF2 region spans residues 2491 to 2501 (CVKHQWNCFNC). Positions 2532-2624 (ASHYVVTDIK…LVDKKLITTA (93 aa)) are Y2. The tract at residues 2532-2808 (ASHYVVTDIK…LTTPFSLKGG (277 aa)) is coV-Y. Residues 2625–2707 (CNGISVTQTM…KSMISAVAAG (83 aa)) are Y3. Residues 2708–2808 (LEFTDENYNN…LTTPFSLKGG (101 aa)) are Y4. A run of 5 helical transmembrane segments spans residues 2814 to 2834 (LLYI…ALLP), 3089 to 3109 (ASSI…YYLI), 3121 to 3141 (VVVI…VFQV), 3148 to 3168 (VYAC…SVIM), and 3173 to 3193 (IVMY…AMVI). Residues 2814–3193 (LLYILFFISL…FCVTYVAMVI (380 aa)) form an HD2 region. One can recognise a Nsp4C domain in the interval 3207–3304 (IGVNVCNDST…TASVSTSFLQ (98 aa)). Residues 3305–3607 (SGIVKMVSPT…YQQLAGVKLQ (303 aa)) enclose the Peptidase C30 domain. Residues His3345 and Cys3449 each act as for 3CL-PRO activity in the active site. 7 helical membrane passes run 3621–3641 (ILIS…WTIF), 3646–3666 (THMI…MLLV), 3671–3691 (FYLT…NYLV), 3714–3734 (FTYV…IFIT), 3742–3762 (IFSL…WYFG), 3770–3790 (LLFI…SLAI), and 3813–3833 (LILL…GFFS). Residues 3621 to 3833 (ILISTFLFSC…ILSCYWGFFS (213 aa)) form an HD3 region. Residues 3895-3983 (SKLTDVKCAN…DYVQDSTVLQ (89 aa)) enclose the RdRp Nsp7 cofactor domain. In terms of domain architecture, RdRp Nsp8 cofactor spans 3984–4180 (ALQSEFVNMA…YNEVANAVMQ (197 aa)). The region spanning 4181–4290 (NNELMPHKLK…GTLSSTIRLQ (110 aa)) is the Nsp9 ssRNA-binding domain. Residues 4291–4428 (AGVATEYAAN…CVGSGVAVQS (138 aa)) form the ExoN/MTase coactivator domain. Zn(2+) contacts are provided by Cys4364, Cys4367, His4373, Cys4380, Cys4406, Cys4409, Cys4417, and Cys4419. Zinc fingers lie at residues 4364-4380 (CIYC…DGLC) and 4406-4419 (CQVC…SCSC). The region spanning 4433–4688 (FLNRVRGTSV…DCELFVNDSY (256 aa)) is the NiRAN domain. The Mn(2+) site is built by Asn4636 and Asp4645. Positions 4689–4787 (RQFDLVQYDF…MNLDVDTHRY (99 aa)) constitute a Nsp12 Interface domain. Positions 4718, 4724, 4729, 4733, and 4910 each coordinate Zn(2+). Residues 4788–5355 (RLSLKDLLLY…NMYLKSAVMQ (568 aa)) form the Nsp12 RNA-dependent RNA polymerase domain. The interval 4790 to 5004 (SLKDLLLYAA…HQKCLKSIAA (215 aa)) is rdRp Fingers N-ter. The segment at 5005–5043 (TRGVPVVIGTTKFYGGWDDMLRHLIKDVDNPVLMGWDYP) is rdRp Palm N-ter. In terms of domain architecture, RdRp catalytic spans 5035 to 5197 (PVLMGWDYPK…CYNSDYASKG (163 aa)). The tract at residues 5044 to 5102 (KCDRAMPNILRIVSSLVLARKHEFCCSHGDRFYRLANECAQVLSEIVMCGGCYYVKPGG) is rdRp Fingers C-ter. His5065, Cys5068, and Cys5069 together coordinate Zn(2+). The interval 5103–5238 (TSSGDATTAF…TNGPHEFCSQ (136 aa)) is rdRp Palm C-ter. Catalysis depends on residues Ser5182, Asp5183, and Asp5184. The tract at residues 5239-5355 (HTMLVKIDGD…NMYLKSAVMQ (117 aa)) is rdRp Thumb. Residues 5356-5468 (SVGACVVCSS…DDFNKIASCK (113 aa)) form the CV ZBD domain. Positions 5360, 5363, 5371, 5374, 5381, 5384, 5388, 5394, 5405, 5410, 5427, and 5430 each coordinate Zn(2+). Positions 5611–5792 (SVPLLFQTNV…MCCLGPDIFL (182 aa)) constitute a (+)RNA virus helicase ATP-binding domain. 5636–5643 (GPPGTGKS) contacts ATP. The region spanning 5793 to 5962 (GNCYRCPKEI…TLSRLHCTTN (170 aa)) is the (+)RNA virus helicase C-terminal domain. Positions 6029–6244 (FFITKDEAIK…RCLAIYDCFC (216 aa)) constitute an ExoN domain. Residues Asp6047, Glu6049, and Glu6148 contribute to the active site. Zn(2+) is bound by residues Cys6164, Cys6167, Cys6183, His6186, His6214, Cys6218, and His6221. Catalysis depends on residues His6225 and Asp6230. Cys6236 contacts Zn(2+). Positions 6253 to 6479 (YPIISNEVSI…NLWNTFTMLQ (227 aa)) constitute an N7-MTase domain. Residue 6288–6294 (DIGNPKG) participates in S-adenosyl-L-methionine binding. The segment at 6366-6380 (CNGGSLYVNKHAFHT) is gpppA-binding. Residues Cys6404, Cys6425, Cys6436, and His6439 each coordinate Zn(2+). Residues 6480 to 6540 (SLENVIYNLV…NIAVELFTKR (61 aa)) form the Nsp15 N-terminal oligomerization domain. Residues 6541–6661 (SIRHHPELKI…FAMRKDGDDV (121 aa)) form the AV-Nsp11N/CoV-Nsp15M domain. In terms of domain architecture, NendoU spans 6711–6850 (EPRSDLERDF…NDNKIMTFYP (140 aa)). Active-site residues include His6741, His6756, Lys6796, Lys6899, Asp6983, Lys7023, and Glu7056. Residues 6855 to 7149 (TSDWKPGYSM…KEIFVGDSLV (295 aa)) enclose the Nidovirus-type SAM-dependent 2'-O-MTase domain.

Belongs to the coronaviruses polyprotein 1ab family. In terms of assembly, interacts with host PHB and PHB2. As to quaternary structure, interacts with papain-like protease nsp3 and non-structural protein 6. Monomer. Homodimer. Only the homodimer shows catalytic activity. In terms of assembly, interacts with nsp8 and nsp12 to form the replication-transcription complex (RTC): nsp12, nsp7, two subunits of nsp8, and up to two subunits of nsp13. As to quaternary structure, interacts with nsp7, nsp13 and nsp12 to form the replication-transcription complex (RTC): nsp12, nsp7, two subunits of nsp8, and up to two subunits of nsp13. Interacts with nsp12. In terms of assembly, interacts with proofreading exoribonuclease nsp14 and 2'-O-methyltransferase nsp16; these interactions enhance nsp14 and nsp16 enzymatic activities. As to quaternary structure, interacts with nsp7 and nsp8 to form the replication-transcription complex (RTC): nsp12, nsp7, two subunits of nsp8, and up to two subunits of nsp13. Interacts with nsp9. Interacts with nsp8 to form the replication-transcription complex (RTC): nsp12, nsp7, two subunits of nsp8, and up to two subunits of nsp13. The cofactor is Mn(2+). Mg(2+) is required as a cofactor. Specific enzymatic cleavages in vivo by its own proteases yield mature proteins. 3CL-PRO and PL-PRO proteinases are autocatalytically processed.

The protein localises to the host membrane. The protein resides in the host cytoplasm. It localises to the host perinuclear region. Its subcellular location is the host endoplasmic reticulum-Golgi intermediate compartment. The catalysed reaction is RNA(n) + a ribonucleoside 5'-triphosphate = RNA(n+1) + diphosphate. It carries out the reaction ATP + H2O = ADP + phosphate + H(+). The enzyme catalyses Thiol-dependent hydrolysis of ester, thioester, amide, peptide and isopeptide bonds formed by the C-terminal Gly of ubiquitin (a 76-residue protein attached to proteins as an intracellular targeting signal).. It catalyses the reaction a 5'-end (N(7)-methyl 5'-triphosphoguanosine)-ribonucleoside in mRNA + S-adenosyl-L-methionine = a 5'-end (N(7)-methyl 5'-triphosphoguanosine)-(2'-O-methyl-ribonucleoside) in mRNA + S-adenosyl-L-homocysteine + H(+). The catalysed reaction is uridylyl-uridylyl-ribonucleotide-RNA = a 3'-end uridylyl-2',3'-cyclophospho-uridine-RNA + a 5'-end dephospho-ribonucleoside-RNA. It carries out the reaction a 5'-end diphospho-ribonucleoside in mRNA + GTP + H(+) = a 5'-end (5'-triphosphoguanosine)-ribonucleoside in mRNA + diphosphate. The enzyme catalyses a 5'-end (5'-triphosphoguanosine)-ribonucleoside in mRNA + S-adenosyl-L-methionine = a 5'-end (N(7)-methyl 5'-triphosphoguanosine)-ribonucleoside in mRNA + S-adenosyl-L-homocysteine. In terms of biological role, the replicase polyprotein of coronaviruses is a multifunctional protein: it contains the activities necessary for the transcription of negative stranded RNA, leader RNA, subgenomic mRNAs and progeny virion RNA as well as proteinases responsible for the cleavage of the polyprotein into functional products. Inhibits host translation by interacting with the 40S ribosomal subunit. The nsp1-40S ribosome complex further induces an endonucleolytic cleavage near the 5'UTR of host mRNAs, targeting them for degradation. Viral mRNAs are not susceptible to nsp1-mediated endonucleolytic RNA cleavage thanks to the presence of a 5'-end leader sequence and are therefore protected from degradation. By suppressing host gene expression, nsp1 facilitates efficient viral gene expression in infected cells and evasion from host immune response. Its function is as follows. May play a role in the modulation of host cell survival signaling pathway by interacting with host PHB and PHB2. Indeed, these two proteins play a role in maintaining the functional integrity of the mitochondria and protecting cells from various stresses. Functionally, responsible for the cleavages located at the N-terminus of the replicase polyprotein. In addition, PL-PRO possesses a deubiquitinating/deISGylating activity and processes both 'Lys-48'- and 'Lys-63'-linked polyubiquitin chains from cellular substrates. Participates together with nsp4 in the assembly of virally-induced cytoplasmic double-membrane vesicles necessary for viral replication. Antagonizes innate immune induction of type I interferon by blocking the phosphorylation, dimerization and subsequent nuclear translocation of host IRF3. Also prevents host NF-kappa-B signaling. In terms of biological role, participates in the assembly of virally-induced cytoplasmic double-membrane vesicles necessary for viral replication. Cleaves the C-terminus of replicase polyprotein at 11 sites. Recognizes substrates containing the core sequence [ILMVF]-Q-|-[SGACN]. Also able to bind an ADP-ribose-1''-phosphate (ADRP). Its function is as follows. Plays a role in the initial induction of autophagosomes from host endoplasmic reticulum. Later, limits the expansion of these phagosomes that are no longer able to deliver viral components to lysosomes. Functionally, forms a hexadecamer with nsp8 (8 subunits of each) that may participate in viral replication by acting as a primase. Alternatively, may synthesize substantially longer products than oligonucleotide primers. In terms of biological role, forms a hexadecamer with nsp7 (8 subunits of each) that may participate in viral replication by acting as a primase. Alternatively, may synthesize substantially longer products than oligonucleotide primers. Forms a primer, NSP9-pU, which is utilized by the polymerase for the initiation of RNA chains. Interacts with ribosome signal recognition particle RNA (SRP). Together with NSP8, suppress protein integration into the cell membrane, thereby disrupting host immune defenses. Its function is as follows. Plays a pivotal role in viral transcription by stimulating both nsp14 3'-5' exoribonuclease and nsp16 2'-O-methyltransferase activities. Therefore plays an essential role in viral mRNAs cap methylation. Functionally, RNA-directed RNA polymerase that catalyzes the transcription of viral genomic and subgenomic RNAs. Acts in complex with nsp7 and nsp8 to transcribe both the minus and positive strands of genomic RNA. The kinase-like NiRAN domain of NSP12 attaches one or more nucleotides to the amino terminus of NSP9, forming a covalent RNA-protein intermediate that serves as transcription/replication primer. Subgenomic RNAs (sgRNAs) are formed by discontinuous transcription: The polymerase has the ability to pause at transcription-regulating sequences (TRS) and jump to the leader TRS, resulting in a major deletion. This creates a series of subgenomic RNAs that are replicated, transcribed and translated. In addition, Nsp12 is a subunit of the viral RNA capping enzyme that catalyzes the RNA guanylyltransferase reaction for genomic and sub-genomic RNAs. Subsequently, the NiRAN domain transfers RNA to GDP, and forms the core cap structure GpppA-RNA. In terms of biological role, multi-functional protein with a zinc-binding domain in N-terminus displaying RNA and DNA duplex-unwinding activities with 5' to 3' polarity. Activity of helicase is dependent on magnesium. Plays a role in viral RNA synthesis through two distinct activities. The N7-guanine methyltransferase activity plays a role in the formation of the cap structure GpppA-RNA. The proofreading exoribonuclease reduces the sensitivity of the virus to RNA mutagens during replication. This activity acts on both ssRNA and dsRNA in a 3'-5' direction. Its function is as follows. Plays a role in viral transcription/replication and prevents the simultaneous activation of host cell dsRNA sensors, such as MDA5/IFIH1, OAS, and PKR. Acts by degrading the 5'-polyuridines generated during replication of the poly(A) region of viral genomic and subgenomic RNAs. Catalyzes a two-step reaction in which a 2'3'-cyclic phosphate (2'3'-cP) is first generated by 2'-O transesterification, which is then hydrolyzed to a 3'-phosphate (3'-P). If not degraded, poly(U) RNA would hybridize with poly(A) RNA tails and activate host dsRNA sensors. Functionally, methyltransferase that mediates mRNA cap 2'-O-ribose methylation to the 5'-cap structure of viral mRNAs. N7-methyl guanosine cap is a prerequisite for binding of nsp16. Therefore plays an essential role in viral mRNAs cap methylation which is essential to evade immune system. In Homo sapiens (Human), this protein is Replicase polyprotein 1ab (rep).